A 697-amino-acid polypeptide reads, in one-letter code: Trishanku (697 aa).

The interval 1–94 is disordered; it reads MEIEPVVRIS…NNNSNSNGTD (94 aa). The segment covering 12 to 47 has biased composition (low complexity); it reads NGNNNQNNNNNNNNNTNNNSNNNNNNNNSSNINSTN. A compositionally biased stretch (polar residues) spans 58–72; it reads KMISNINNQKSPNPL. A compositionally biased stretch (low complexity) spans 73-91; sequence NSSVDDNNNTNNNNNSNSN. In terms of domain architecture, BTB spans 122-189; the sequence is SDVIFKVGDR…ICIGILDLDY (68 aa). The tract at residues 311 to 455 is disordered; the sequence is IQQQQQQQQQ…DSANDDYEYS (145 aa). Positions 312 to 331 are enriched in low complexity; that stretch reads QQQQQQQQQQLQSANGASGK. Basic residues predominate over residues 332–344; it reads SHGKRSSSSHLKK. A compositionally biased stretch (low complexity) spans 353 to 363; the sequence is GSCSSRCSSRR. The segment covering 416–453 has biased composition (acidic residues); that stretch reads DDFENDSEDGDDDDEDDDEDDDFTDDDDKDDSANDDYE.

As to expression, expressed strongly in presumptive spore (prespore or psp) cells during the late G2 phase of cell cycle. Present at a low level in vegetative cells.

In terms of biological role, required for normal morphogenesis and cell-type stability. This is Trishanku (triA) from Dictyostelium discoideum (Social amoeba).